The sequence spans 231 residues: Octanoyltransferase (231 aa).

The BPL/LPL catalytic domain occupies 49 to 231 (SEAAEQVWLL…KRTFSEVFGS (183 aa)). Residues 87-94 (RGGQITYH), 162-164 (AIG), and 175-177 (GVS) contribute to the substrate site. Residue cysteine 193 is the Acyl-thioester intermediate of the active site.

Belongs to the LipB family.

The protein resides in the cytoplasm. It carries out the reaction octanoyl-[ACP] + L-lysyl-[protein] = N(6)-octanoyl-L-lysyl-[protein] + holo-[ACP] + H(+). It participates in protein modification; protein lipoylation via endogenous pathway; protein N(6)-(lipoyl)lysine from octanoyl-[acyl-carrier-protein]: step 1/2. Catalyzes the transfer of endogenously produced octanoic acid from octanoyl-acyl-carrier-protein onto the lipoyl domains of lipoate-dependent enzymes. Lipoyl-ACP can also act as a substrate although octanoyl-ACP is likely to be the physiological substrate. The chain is Octanoyltransferase from Nitrobacter winogradskyi (strain ATCC 25391 / DSM 10237 / CIP 104748 / NCIMB 11846 / Nb-255).